Reading from the N-terminus, the 337-residue chain is tRNA N6-adenosine threonylcarbamoyltransferase (337 aa).

Histidine 110 and histidine 114 together coordinate Fe cation. Substrate contacts are provided by residues 133 to 137 (LVSGK), aspartate 166, glycine 179, and asparagine 271. Residue aspartate 300 participates in Fe cation binding.

It belongs to the KAE1 / TsaD family. Requires Fe(2+) as cofactor.

Its subcellular location is the cytoplasm. It catalyses the reaction L-threonylcarbamoyladenylate + adenosine(37) in tRNA = N(6)-L-threonylcarbamoyladenosine(37) in tRNA + AMP + H(+). In terms of biological role, required for the formation of a threonylcarbamoyl group on adenosine at position 37 (t(6)A37) in tRNAs that read codons beginning with adenine. Is involved in the transfer of the threonylcarbamoyl moiety of threonylcarbamoyl-AMP (TC-AMP) to the N6 group of A37, together with TsaE and TsaB. TsaD likely plays a direct catalytic role in this reaction. In Buchnera aphidicola subsp. Schizaphis graminum (strain Sg), this protein is tRNA N6-adenosine threonylcarbamoyltransferase.